A 328-amino-acid chain; its full sequence is Cytochrome c biogenesis protein CcsA (328 aa).

8 helical membrane-spanning segments follow: residues 15 to 35, 36 to 56, 68 to 88, 97 to 117, 142 to 162, 236 to 256, 263 to 283, and 297 to 317; these read FLVLFLTMLVYWAGAAFPSIP, LLPGLGSTGVAIANLCIAALL, ISNLYESLFFLAWGVTAVHLI, LVGVVTTPVAMGITAFATLSL, VMMLSYAALMVGSLMAIAFLI, VIGLGFPLLTIGIIAGAVWAN, WSWDPKETWALITWLVFAAYL, and AILAASGFVVVWVCYLGVNLL.

The protein belongs to the CcmF/CycK/Ccl1/NrfE/CcsA family. In terms of assembly, may interact with ccs1.

Its subcellular location is the cellular thylakoid membrane. Functionally, required during biogenesis of c-type cytochromes (cytochrome c6 and cytochrome f) at the step of heme attachment. This is Cytochrome c biogenesis protein CcsA from Microcystis aeruginosa (strain NIES-843 / IAM M-2473).